We begin with the raw amino-acid sequence, 228 residues long: MTARRAPAVNRDVLEQMLIDGTAALDIVLTDAQRNQLLDYVALLGKWNAVYNLTAIRDPRQMLIQHILDSLSIVPHLRGRTDARVLDVGSGGGLPGIVLAIVQPGWQVTLNDIVQKKSAFQTQMRAELKLTNLSVVTGRVESLQPGGEVPEKFDMIVSRAFADLSDFVKLARHLVAPGGSIWAMKGVHPDDEIARLPEGSRVKQTIRLAVPMLDAERHLIEVAVDEAN.

S-adenosyl-L-methionine is bound by residues G89, L94, V140 to E141, and R159.

It belongs to the methyltransferase superfamily. RNA methyltransferase RsmG family.

It is found in the cytoplasm. It catalyses the reaction guanosine(527) in 16S rRNA + S-adenosyl-L-methionine = N(7)-methylguanosine(527) in 16S rRNA + S-adenosyl-L-homocysteine. Functionally, specifically methylates the N7 position of guanine in position 527 of 16S rRNA. In Burkholderia vietnamiensis (strain G4 / LMG 22486) (Burkholderia cepacia (strain R1808)), this protein is Ribosomal RNA small subunit methyltransferase G.